A 621-amino-acid polypeptide reads, in one-letter code: Chaperone protein HtpG (621 aa).

The interval 1 to 328 (MTQEKKKFDA…SEDLPLNISR (328 aa)) is a; substrate-binding. The tract at residues 329–544 (ESLQHNNVLE…DTAMDIRMER (216 aa)) is b. The c stretch occupies residues 545–621 (FLIEQKQIAS…LNDILQKAIL (77 aa)).

This sequence belongs to the heat shock protein 90 family. Homodimer.

It localises to the cytoplasm. Functionally, molecular chaperone. Has ATPase activity. The protein is Chaperone protein HtpG of Rickettsia typhi (strain ATCC VR-144 / Wilmington).